A 91-amino-acid polypeptide reads, in one-letter code: Small ribosomal subunit protein uS15 (91 aa).

It belongs to the universal ribosomal protein uS15 family. Part of the 30S ribosomal subunit. Forms a bridge to the 50S subunit in the 70S ribosome, contacting the 23S rRNA.

One of the primary rRNA binding proteins, it binds directly to 16S rRNA where it helps nucleate assembly of the platform of the 30S subunit by binding and bridging several RNA helices of the 16S rRNA. Functionally, forms an intersubunit bridge (bridge B4) with the 23S rRNA of the 50S subunit in the ribosome. This chain is Small ribosomal subunit protein uS15, found in Rickettsia akari (strain Hartford).